The primary structure comprises 383 residues: Opsin Rh4 (383 aa).

The Extracellular segment spans residues 1–57 (MDIAGSLCNASEGPVLRPEARVSGNGDLQFLGWNVPPDQIQHIPEHWLTQLEPPASM). Asn9 carries N-linked (GlcNAc...) asparagine glycosylation. A helical transmembrane segment spans residues 58–82 (HYMLGVFYIFLFCASTVGNGMVIWI). Residues 83–94 (FSTSKALRTPSN) lie on the Cytoplasmic side of the membrane. Residues 95–117 (MFVLNLAVFDFIMCLKAPIFIYN) form a helical membrane-spanning segment. Over 118 to 133 (SFHRGFALGNTGCQIF) the chain is Extracellular. A disulfide bridge connects residues Cys130 and Cys207. The chain crosses the membrane as a helical span at residues 134–153 (AAIGSYSGIGAGMTNAAIGY). At 154-171 (DRLNVITKPMNRNMTFTK) the chain is on the cytoplasmic side. A helical membrane pass occupies residues 172–196 (AIIMNVIIWLYCTPWVVLPLTQFWD). Over 197 to 220 (RFVPEGYLTSCTFDYLTDNFDTRL) the chain is Extracellular. Residues 221-248 (FVGTIFFFSFVCPTLMIIYYYSQIVGHV) traverse the membrane as a helical segment. Residues 249–284 (FSHEKALREQAKKMNVESLRSNVDKSKDTAEIRIAK) lie on the Cytoplasmic side of the membrane. A helical transmembrane segment spans residues 285 to 308 (AAITICFLFFVSWTPYGVMSLIGA). Topologically, residues 309–316 (FGDKSLLT) are extracellular. Residues 317–341 (PGATMIPACTCKLVACIDPFVYAIS) traverse the membrane as a helical segment. Lys328 is subject to N6-(retinylidene)lysine. Residues 342–383 (HPRYRMELQKRCPWLAIDEKAPESSSAASTTTTQEQQQTTAA) lie on the Cytoplasmic side of the membrane. The tract at residues 361 to 383 (KAPESSSAASTTTTQEQQQTTAA) is disordered. Low complexity predominate over residues 364–383 (ESSSAASTTTTQEQQQTTAA).

This sequence belongs to the G-protein coupled receptor 1 family. Opsin subfamily. In terms of processing, phosphorylated on some or all of the serine and threonine residues present in the C-terminal region.

It localises to the membrane. Functionally, visual pigments are the light-absorbing molecules that mediate vision. They consist of an apoprotein, opsin, covalently linked to cis-retinal. The chain is Opsin Rh4 (Rh4) from Drosophila virilis (Fruit fly).